The following is a 127-amino-acid chain: Holo-[acyl-carrier-protein] synthase (127 aa).

The Mg(2+) site is built by Asp8 and Glu57.

It belongs to the P-Pant transferase superfamily. AcpS family. Mg(2+) serves as cofactor.

It is found in the cytoplasm. The enzyme catalyses apo-[ACP] + CoA = holo-[ACP] + adenosine 3',5'-bisphosphate + H(+). Its function is as follows. Transfers the 4'-phosphopantetheine moiety from coenzyme A to a Ser of acyl-carrier-protein. This is Holo-[acyl-carrier-protein] synthase from Ruthia magnifica subsp. Calyptogena magnifica.